We begin with the raw amino-acid sequence, 620 residues long: Tyrosine-protein kinase ITK/TSK (620 aa).

Positions 4-111 (FILLEEQLIK…WVLALKEETR (108 aa)) constitute a PH domain. Residues 113-149 (NNSLVPKYHPNFWMDGKWRCCSQLEKLATGCAQYDPT) form a Btk-type zinc finger. Residues histidine 121, cysteine 132, cysteine 133, and cysteine 143 each contribute to the Zn(2+) site. One can recognise an SH3 domain in the interval 171–231 (PEETVVIALY…PSSYLVEKSP (61 aa)). Tyrosine 180 bears the Phosphotyrosine; by autocatalysis mark. The SH2 domain maps to 239–338 (WYNKSISRDK…GLVTRLRYPV (100 aa)). Residues 363–615 (LTFVQEIGSG…SRLLRQLAEI (253 aa)) form the Protein kinase domain. ATP contacts are provided by residues 369-377 (IGSGQFGLV) and lysine 391. Aspartate 482 acts as the Proton acceptor in catalysis. At tyrosine 512 the chain carries Phosphotyrosine; by LCK. Serine 565 is subject to Phosphoserine.

It belongs to the protein kinase superfamily. Tyr protein kinase family. TEC subfamily. As to quaternary structure, homooligomerizes; this association negatively regulates kinase activity. Interacts with PPIA/CYPA; this interaction regulates TCR signal strength via a proline-directed conformational switch in ITK. Interacts with THEMIS. Interacts with FASLG. Interacts with VAV1; this interaction is important for VAV1 localization and TCR-induced actin polarization. Interacts with TBX21. Zn(2+) serves as cofactor. Post-translationally, phosphorylated at Tyr-512 in the activation loop of the kinase domain by LCK. Subsequent autophosphorylation at Tyr-180 leads to the kinase activation. The autophosphorylated Tyr-180 lies within the substrate binding sequence of the SH3 domain. In terms of processing, ubiquitinated. As to expression, T-cell lines and natural killer cell lines.

It localises to the cytoplasm. The protein localises to the nucleus. It carries out the reaction L-tyrosyl-[protein] + ATP = O-phospho-L-tyrosyl-[protein] + ADP + H(+). Its function is as follows. Tyrosine kinase that plays an essential role in regulation of the adaptive immune response. Regulates the development, function and differentiation of conventional T-cells and nonconventional NKT-cells. When antigen presenting cells (APC) activate T-cell receptor (TCR), a series of phosphorylation lead to the recruitment of ITK to the cell membrane, in the vicinity of the stimulated TCR receptor, where it is phosphorylated by LCK. Phosphorylation leads to ITK autophosphorylation and full activation. Once activated, phosphorylates PLCG1, leading to the activation of this lipase and subsequent cleavage of its substrates. In turn, the endoplasmic reticulum releases calcium in the cytoplasm and the nuclear activator of activated T-cells (NFAT) translocates into the nucleus to perform its transcriptional duty. Phosphorylates 2 essential adapter proteins: the linker for activation of T-cells/LAT protein and LCP2. Then, a large number of signaling molecules such as VAV1 are recruited and ultimately lead to lymphokine production, T-cell proliferation and differentiation. Required for TCR-mediated calcium response in gamma-delta T-cells, may also be involved in the modulation of the transcriptomic signature in the Vgamma2-positive subset of immature gamma-delta T-cells. Phosphorylates TBX21 at 'Tyr-530' and mediates its interaction with GATA3. In Homo sapiens (Human), this protein is Tyrosine-protein kinase ITK/TSK (ITK).